The sequence spans 490 residues: Betaine aldehyde dehydrogenase (490 aa).

Thr26, Ile27, and Asp93 together coordinate K(+). Residue 150–152 (GAW) participates in NAD(+) binding. Lys162 acts as the Charge relay system in catalysis. NAD(+) is bound at residue 176-179 (KPSE). Val180 is a K(+) binding site. An NAD(+)-binding site is contributed by 230–233 (GVAS). Leu246 provides a ligand contact to K(+). Glu252 (proton acceptor) is an active-site residue. 3 residues coordinate NAD(+): Gly254, Cys286, and Glu387. Cys286 (nucleophile) is an active-site residue. Cys286 is subject to Cysteine sulfenic acid (-SOH). Positions 457 and 460 each coordinate K(+). The Charge relay system role is filled by Glu464.

It belongs to the aldehyde dehydrogenase family. As to quaternary structure, dimer of dimers. It depends on K(+) as a cofactor.

The enzyme catalyses betaine aldehyde + NAD(+) + H2O = glycine betaine + NADH + 2 H(+). The protein operates within amine and polyamine biosynthesis; betaine biosynthesis via choline pathway; betaine from betaine aldehyde: step 1/1. Involved in the biosynthesis of the osmoprotectant glycine betaine. Catalyzes the irreversible oxidation of betaine aldehyde to the corresponding acid. In Escherichia coli O45:K1 (strain S88 / ExPEC), this protein is Betaine aldehyde dehydrogenase.